The primary structure comprises 375 residues: Stimulator of interferon genes protein 2 (375 aa).

Helical transmembrane passes span 30 to 50 (TATV…LLAV), 60 to 80 (IHFL…GELV), 114 to 134 (AGSI…VLYE), and 144 to 164 (YPIL…LVGL). 3 residues coordinate 2',3'-cGAMP: Tyr195, Arg256, and Arg262.

The protein belongs to the STING family.

It localises to the membrane. In terms of biological role, facilitator of innate immune signaling that acts as a sensor of second messenger signals produced by cyclic GMP-AMP synthase-like receptors (cGLRs) and promotes the production of type I interferon. Innate immune response is triggered in response to nucleotides from viruses and bacteria delivered to the cytoplasm. Acts by binding cyclic dinucleotides: recognizes and binds 2'-3' linked cGAMP (2'-3'-cGAMP), a second messengers produced by cGLRs in response to nucleotides in the cytosol, such as double-stranded RNA (dsRNA). Upon binding to 2'-3'-cGAMP, oligomerizes and promotes the recruitment and subsequent activation of the transcription factor IRF3 to induce expression of type I interferon. The chain is Stimulator of interferon genes protein 2 from Stylophora pistillata (Smooth cauliflower coral).